The chain runs to 235 residues: MAKELIYSGKAKDILTTEDENVIIAQYKDQATALNGVKKEQIAGKGQLNNQISSLIFQKLNAAGVATHFIKKISETEQLNKKVKIIPLEVVLRNVTAGSFSKRFGVKEGIQLEKPIVEFYYKNDDLDDPFINDEHVKFLKLANDEDIAYIKAETRRINKLLSDWFHQIGLKLIDFKLEFGFDKDGKIILADEFSPDNCRLWDAQGHHMDKDVFRRGLGELTDVYEVVWEKLQELK.

This sequence belongs to the SAICAR synthetase family.

The enzyme catalyses 5-amino-1-(5-phospho-D-ribosyl)imidazole-4-carboxylate + L-aspartate + ATP = (2S)-2-[5-amino-1-(5-phospho-beta-D-ribosyl)imidazole-4-carboxamido]succinate + ADP + phosphate + 2 H(+). Its pathway is purine metabolism; IMP biosynthesis via de novo pathway; 5-amino-1-(5-phospho-D-ribosyl)imidazole-4-carboxamide from 5-amino-1-(5-phospho-D-ribosyl)imidazole-4-carboxylate: step 1/2. In Streptococcus mutans serotype c (strain ATCC 700610 / UA159), this protein is Phosphoribosylaminoimidazole-succinocarboxamide synthase.